Here is a 113-residue protein sequence, read N- to C-terminus: MAGLKDVVTREYTINMHKRLHGVSFKKRAPKAVKEIKKFAKLHMGTEDVRLAPELNQEIWKRGVKGVAFRLRLRISRKRNEEENAKNPLFSYVEPVFVASAKGLQTTVVEEDA.

This sequence belongs to the eukaryotic ribosomal protein eL31 family.

This chain is Large ribosomal subunit protein eL31 (RPL31), found in Candida glabrata (strain ATCC 2001 / BCRC 20586 / JCM 3761 / NBRC 0622 / NRRL Y-65 / CBS 138) (Yeast).